A 163-amino-acid chain; its full sequence is Phosphopantetheine adenylyltransferase (163 aa).

The ATP site is built by Ser-10 and His-18. Residue Ser-10 participates in substrate binding. Substrate is bound by residues Lys-42, Thr-75, and Arg-89. ATP-binding positions include 90-92, Glu-100, and 125-131; these read GIR and YAHVSSS.

Belongs to the bacterial CoaD family. As to quaternary structure, homohexamer. The cofactor is Mg(2+).

It is found in the cytoplasm. The enzyme catalyses (R)-4'-phosphopantetheine + ATP + H(+) = 3'-dephospho-CoA + diphosphate. The protein operates within cofactor biosynthesis; coenzyme A biosynthesis; CoA from (R)-pantothenate: step 4/5. Reversibly transfers an adenylyl group from ATP to 4'-phosphopantetheine, yielding dephospho-CoA (dPCoA) and pyrophosphate. The chain is Phosphopantetheine adenylyltransferase from Enterococcus faecalis (strain ATCC 700802 / V583).